A 79-amino-acid chain; its full sequence is Acyl carrier protein (79 aa).

The Carrier domain maps to Ser2–Lys77. Ser37 carries the post-translational modification O-(pantetheine 4'-phosphoryl)serine.

Belongs to the acyl carrier protein (ACP) family. In terms of processing, 4'-phosphopantetheine is transferred from CoA to a specific serine of apo-ACP by AcpS. This modification is essential for activity because fatty acids are bound in thioester linkage to the sulfhydryl of the prosthetic group.

It is found in the cytoplasm. The protein operates within lipid metabolism; fatty acid biosynthesis. Carrier of the growing fatty acid chain in fatty acid biosynthesis. This Acidiphilium cryptum (strain JF-5) protein is Acyl carrier protein.